Here is a 215-residue protein sequence, read N- to C-terminus: Cytochrome b6 (215 aa).

A helical membrane pass occupies residues 32 to 52 (IFYCLGGITLTCFLVQVATGF). C35 contributes to the heme c binding site. Residues H86 and H100 each coordinate heme b. The next 3 helical transmembrane spans lie at 90-110 (ASMM…TGGF), 116-136 (LTWV…VTGY), and 186-206 (LHTF…FPMI). Heme b is bound by residues H187 and H202.

The protein belongs to the cytochrome b family. PetB subfamily. The 4 large subunits of the cytochrome b6-f complex are cytochrome b6, subunit IV (17 kDa polypeptide, PetD), cytochrome f and the Rieske protein, while the 4 small subunits are PetG, PetL, PetM and PetN. The complex functions as a dimer. Heme b is required as a cofactor. Requires heme c as cofactor.

Its subcellular location is the plastid. It localises to the chloroplast thylakoid membrane. Component of the cytochrome b6-f complex, which mediates electron transfer between photosystem II (PSII) and photosystem I (PSI), cyclic electron flow around PSI, and state transitions. In Solanum bulbocastanum (Wild potato), this protein is Cytochrome b6.